Consider the following 586-residue polypeptide: MFS-type transporter ucsD (586 aa).

The tract at residues 1 to 56 (MSRNSGTTLEDGPLHADPTTEAPNNATVTTNVTANDENTEKEVDADAAAAAPAEAP) is disordered. Low complexity-rich tracts occupy residues 19 to 36 (TTEAPNNATVTTNVTAND) and 46 to 56 (DAAAAAPAEAP). Residues Asn-25 and Asn-31 are each glycosylated (N-linked (GlcNAc...) asparagine). 8 consecutive transmembrane segments (helical) span residues 65-85 (WAIVAALAFTALLSSLEGTII), 101-121 (SFIWVPNGYFLATIVMLPLMA), 131-151 (WLTLISVATFTLGSGICGGAN), 164-184 (GFGGGGIALMINIILTDLVPL), 192-212 (GIVQMVSAVGAALGPFLGGLL), 220-240 (WVFYINLPIGGTSLVALFFFL), 263-283 (AIFIASTVSVLIGVTWGGAVY), and 290-310 (VIVPLVLGFFGLGLFVVYEWT). Residue Asn-324 is glycosylated (N-linked (GlcNAc...) asparagine). 6 helical membrane-spanning segments follow: residues 330–350 (VLGVTFLHTVATYWSFYFMPI), 368–388 (LPLFAGIFPFAILGGMLLAKF), 393–413 (PMHLIGMAIITLSFGLFSLLD), 420–440 (AWACFQLLFAVGAGLMIAILL), 458–478 (VWTFVRGFGTVWGVTIPSAIF), and 532–552 (LRTVWYVGVALAGFGWLLIWL).

It belongs to the major facilitator superfamily.

It is found in the membrane. In terms of biological role, MFS-type transporter; part of the gene cluster that mediates the biosynthesis of UCS1025A, a member of the pyrrolizidinone family that acts as a strong telomerase inhibitor and displays potent antibacterial and antitumor properties. These compounds share a hemiaminal-containing pyrrolizidinone core fused with a gamma-lactone, giving a furopyrrolizidine that is connected to a decalin fragment. The sequence is that of MFS-type transporter ucsD from Acremonium sp.